The chain runs to 171 residues: UPF0312 protein SAB2563 (171 aa).

Belongs to the UPF0312 family.

The sequence is that of UPF0312 protein SAB2563 from Staphylococcus aureus (strain bovine RF122 / ET3-1).